We begin with the raw amino-acid sequence, 315 residues long: MPDMKLFAGNATPELAQRIANRLYTSLGDAAVGRFSDGEVSVQINENVRGGDIFIIQSTCAPTNDNLMELVVMVDALRRASAGRITAVIPYFGYARQDRRVRSARVPITAKVVADFLSSVGVDRVLTVDLHAEQIQGFFDVPVDNVFGSPILLEDMLQQNLENPIVVSPDIGGVVRARAIAKLLNDTDMAIIDKRRPRANVSQVMHIIGDVAGRDCVLVDDMIDTGGTLCKAAEALKERGAKRVFAYATHPIFSGNAVDNIRNSVIDEVIVCDTIPLSAEIKALKNVRTLTLSGMLAEAIRRISNEESISAMFEH.

Residues 37–39 (DGE) and 96–97 (RQ) contribute to the ATP site. Mg(2+) is bound by residues His131 and Asp170. Lys194 is a catalytic residue. D-ribose 5-phosphate is bound by residues Arg196, Asp220, and 224-228 (DTGGT).

Belongs to the ribose-phosphate pyrophosphokinase family. Class I subfamily. As to quaternary structure, homohexamer. It depends on Mg(2+) as a cofactor.

The protein resides in the cytoplasm. The catalysed reaction is D-ribose 5-phosphate + ATP = 5-phospho-alpha-D-ribose 1-diphosphate + AMP + H(+). The protein operates within metabolic intermediate biosynthesis; 5-phospho-alpha-D-ribose 1-diphosphate biosynthesis; 5-phospho-alpha-D-ribose 1-diphosphate from D-ribose 5-phosphate (route I): step 1/1. Functionally, involved in the biosynthesis of the central metabolite phospho-alpha-D-ribosyl-1-pyrophosphate (PRPP) via the transfer of pyrophosphoryl group from ATP to 1-hydroxyl of ribose-5-phosphate (Rib-5-P). The polypeptide is Ribose-phosphate pyrophosphokinase (Yersinia pestis).